Reading from the N-terminus, the 475-residue chain is Protein FAM161A (475 aa).

The interval 53–107 (ISDSSSSSASEKSCSHPALSVTSLSEPDLDGSSSLSTTTDEGLPDLEEKTPGESS) is disordered. Low complexity-rich tracts occupy residues 54-64 (SDSSSSSASEK) and 82-93 (DGSSSLSTTTDE). Residues 162–234 (VREQNRREKA…RERNRAALLA (73 aa)) adopt a coiled-coil conformation. A required for interaction with CFAP418 region spans residues 255 to 434 (KLRDLFRAKR…PTASSRGREQ (180 aa)). A disordered region spans residues 314–337 (RSACRRFRDPRSPAKPRGKHRRRC). Residues 327–337 (AKPRGKHRRRC) show a composition bias toward basic residues. Residue Lys-377 forms a Glycyl lysine isopeptide (Lys-Gly) (interchain with G-Cter in SUMO2) linkage. The segment at 389-441 (EEILRETRRPGRSPRRKSPGRSSNPKPRPHECSPPMPTASSRGREQAIRRSEK) is disordered. The span at 398 to 407 (PGRSPRRKSP) shows a compositional bias: basic residues. Residues 430-441 (RGREQAIRRSEK) are compositionally biased toward basic and acidic residues.

This sequence belongs to the FAM161 family. Interacts (via central region) with CFAP418 (via N-terminus); the interaction is direct. Interacts (via C-terminus) with microtubules. Interacts with LCA5. Interacts with CEP290. Interacts with SDCCAG8. Interacts with FAM161B. Interacts with POC1B. Interacts with CEP78. Forms a microtubule-associated complex with POC5, CETN2 and POC1B. Interacts with CCDC15. Expressed in the retina.

It is found in the cytoplasm. The protein localises to the cytoskeleton. The protein resides in the cilium basal body. Its subcellular location is the cell projection. It localises to the cilium. It is found in the microtubule organizing center. The protein localises to the centrosome. The protein resides in the centriole. Involved in ciliogenesis. The chain is Protein FAM161A from Mus musculus (Mouse).